Reading from the N-terminus, the 382-residue chain is Acetylserotonin O-methyltransferase (382 aa).

Gly-218, Asp-241, Asp-261, Met-262, and Lys-275 together coordinate S-adenosyl-L-homocysteine. The active-site Proton acceptor is the His-279. Active-site residues include Glu-308 and Glu-347.

This sequence belongs to the class I-like SAM-binding methyltransferase superfamily. Cation-independent O-methyltransferase family.

It localises to the cytoplasm. The enzyme catalyses N-acetylserotonin + S-adenosyl-L-methionine = melatonin + S-adenosyl-L-homocysteine + H(+). Its pathway is aromatic compound metabolism; melatonin biosynthesis; melatonin from serotonin: step 1/2. In terms of biological role, methyltransferase which catalyzes the transfer of a methyl group onto N-acetylserotonin, producing melatonin (N-acetyl-5-methoxytryptamine). Does not seem to possess caffeate O-methyltransferase activity. Implicated in melatonin-dependent circadian dynamics of stomatal aperture to minimize night water loss and promote drought tolerance. Prevents seed germination by promoting melatonin biosynthesis. Promotes melatonin-triggered defense responses to the necrotrophic fungus Botrytis cinerea. Its function is as follows. (Microbial infection) Promotes melatonin-triggered defense responses to the necrotrophic fungus Botrytis cinerea. The protein is Acetylserotonin O-methyltransferase of Arabidopsis thaliana (Mouse-ear cress).